We begin with the raw amino-acid sequence, 319 residues long: R-phycoerythrin gamma chain, chloroplastic (319 aa).

The N-terminal 71 residues, 1–71, are a transit peptide targeting the chloroplast; sequence MDSPAFAVTG…RPKKLASYKR (71 aa). Cys-96 and Cys-135 together coordinate phycourobilin. Cys-212 is a binding site for (2R,3E)-phycoerythrobilin. Cys-299 serves as a coordination point for phycourobilin.

Heteromer of 4 alpha, 4 beta and one gamma chains. Post-translationally, contains four covalently linked bilin chromophores.

The protein resides in the plastid. It localises to the chloroplast thylakoid membrane. In Corallina officinalis (Coral seaweed), this protein is R-phycoerythrin gamma chain, chloroplastic.